A 450-amino-acid chain; its full sequence is Glucose-6-phosphate isomerase (450 aa).

E291 acts as the Proton donor in catalysis. Catalysis depends on residues H312 and K426.

It belongs to the GPI family.

The protein localises to the cytoplasm. It carries out the reaction alpha-D-glucose 6-phosphate = beta-D-fructose 6-phosphate. It functions in the pathway carbohydrate biosynthesis; gluconeogenesis. Its pathway is carbohydrate degradation; glycolysis; D-glyceraldehyde 3-phosphate and glycerone phosphate from D-glucose: step 2/4. Its function is as follows. Catalyzes the reversible isomerization of glucose-6-phosphate to fructose-6-phosphate. This is Glucose-6-phosphate isomerase from Clostridium botulinum (strain Loch Maree / Type A3).